The primary structure comprises 74 residues: UPF0346 protein PEPE_1063 (74 aa).

It belongs to the UPF0346 family.

In Pediococcus pentosaceus (strain ATCC 25745 / CCUG 21536 / LMG 10740 / 183-1w), this protein is UPF0346 protein PEPE_1063.